We begin with the raw amino-acid sequence, 465 residues long: Pancreatic triacylglycerol lipase (465 aa).

The N-terminal stretch at 1–16 (MLPLWTLSLLLGAVAG) is a signal peptide. Disulfide bonds link Cys20-Cys26 and Cys107-Cys118. Residue Ser169 is the Nucleophile of the active site. N-linked (GlcNAc...) asparagine glycosylation occurs at Asn183. The active-site Charge relay system is the Asp193. 4 residues coordinate Ca(2+): Glu204, Arg207, Asp209, and Asp212. Cys254 and Cys278 form a disulfide bridge. The active-site Charge relay system is the His280. 3 disulfides stabilise this stretch: Cys302–Cys313, Cys316–Cys321, and Cys449–Cys465. Residues 355–465 (WRYKVSVTLS…EEVLLTLTPC (111 aa)) form the PLAT domain.

The protein belongs to the AB hydrolase superfamily. Lipase family. As to quaternary structure, forms a 1:1 stoichiometric complex with (pro)colipase/CLPS.

It localises to the secreted. The catalysed reaction is a triacylglycerol + H2O = a diacylglycerol + a fatty acid + H(+). It carries out the reaction 1,2,3-tributanoylglycerol + H2O = dibutanoylglycerol + butanoate + H(+). The enzyme catalyses 1,2,3-tri-(9Z-octadecenoyl)-glycerol + H2O = di-(9Z)-octadecenoylglycerol + (9Z)-octadecenoate + H(+). It catalyses the reaction all-trans-retinyl hexadecanoate + H2O = all-trans-retinol + hexadecanoate + H(+). The catalysed reaction is 1,2-di-(9Z-octadecenoyl)-glycerol + H2O = (9Z-octadecenoyl)-glycerol + (9Z)-octadecenoate + H(+). Its activity is regulated as follows. Inhibited by bile salts, is reactivated by (pro)colipase/CLPS. Functionally, plays an important role in fat metabolism. It preferentially splits the esters of long-chain fatty acids at positions 1 and 3, producing mainly 2-monoacylglycerol and free fatty acids, and shows considerably higher activity against insoluble emulsified substrates than against soluble ones. This is Pancreatic triacylglycerol lipase from Homo sapiens (Human).